The sequence spans 151 residues: Small ribosomal subunit protein uS15 (151 aa).

It belongs to the universal ribosomal protein uS15 family.

This chain is Small ribosomal subunit protein uS15 (RpS13), found in Choristoneura parallela (Spotted fireworm moth).